We begin with the raw amino-acid sequence, 351 residues long: sn-1 oleoyl-lipid 12-desaturase (351 aa).

The interval 1 to 20 is disordered; sequence MTLSIVKSEDSSSRPSAVPS. A run of 2 helical transmembrane segments spans residues 44–62 and 68–88; these read AWMTVIINVVMVGLGWLGI and FLLPVVWVFTGTALTGFFVIG. Residues 89–93 carry the Histidine box-1 motif; sequence HDCGH. A helical membrane pass occupies residues 100-120; it reads VWVNDWVGHILFLPIIYPFHS. The Histidine box-2 signature appears at 125 to 129; the sequence is HNQHH. Transmembrane regions (helical) follow at residues 199 to 219 and 221 to 241; these read LLVIGAAAIAFPTMILTIGVW and FVKFWVIPWLVFHFWMSTFTL. The Histidine box-3 signature appears at 289–293; sequence HHVTT.

This sequence belongs to the fatty acid desaturase type 2 family. It depends on Fe(2+) as a cofactor.

It localises to the cellular thylakoid membrane. The catalysed reaction is a 1-[(9Z)-octadecenoyl]-2-acyl-glycerolipid + 2 reduced [2Fe-2S]-[ferredoxin] + O2 + 2 H(+) = a 1-[(9Z,12Z)-octadecdienoyl]-2-acyl-glycerolipid + 2 oxidized [2Fe-2S]-[ferredoxin] + 2 H2O. It participates in lipid metabolism; polyunsaturated fatty acid biosynthesis. Its function is as follows. Desaturase involved in fatty acid biosynthesis. Introduces a double bond at carbon 12 of oleoyl groups (18:1) attached to the sn-1 position of the glycerol moiety of membrane glycerolipids. The sequence is that of sn-1 oleoyl-lipid 12-desaturase from Arthrospira platensis (Spirulina platensis).